The following is a 949-amino-acid chain: Insulin receptor substrate 1 (949 aa).

Residues 8–109 enclose the PH domain; the sequence is GMALSGYLKK…WLDKLLVLQR (102 aa). Positions 122–236 constitute an IRS-type PTB domain; the sequence is YDQVWQVVIQ…SAMSAKTESN (115 aa). The segment at 247–270 is disordered; that stretch reads PDLSHEPMRKRSSSANEASKPINV. Phosphoserine occurs at positions 286, 287, and 342. A compositionally biased stretch (polar residues) spans 304–345; sequence RNGTLSESSNQTYFGSNHGLRSNTISGNRPHSTNKHSNSPTF. Residues 304–373 form a disordered region; that stretch reads RNGTLSESSN…SDDNGSYSHY (70 aa). Tyr-410 carries the phosphotyrosine; by INSR modification. The YXXM motif 1 signature appears at 410–413; it reads YIPM. Residues 530 to 556 form a disordered region; that stretch reads RSQSSITKEGSGYGTSGNRQKKSTSAP. Position 554 is a phosphoserine (Ser-554). The short motif at 640–643 is the YXXM motif 2 element; the sequence is YLEM. The span at 696–706 shows a compositional bias: basic and acidic residues; that stretch reads REQTTSEEKKS. Residues 696 to 718 form a disordered region; it reads REQTTSEEKKSNSPLNEKPFSLK. Tyr-892 is subject to Phosphotyrosine; by INSR. A disordered region spans residues 906–949; the sequence is AKYLKRGSRESPPVSACPEDGNTYAKIDFDQSDSSSSSSNIFNT. A phosphoserine mark is found at Ser-913 and Ser-916. Residue Tyr-929 is modified to Phosphotyrosine; by INSR. Residues 937–949 show a composition bias toward low complexity; the sequence is SDSSSSSSNIFNT.

In terms of assembly, bindings to phosphatidylinositol 3-kinase and SHP2.

Its function is as follows. Activates phosphatidylinositol 3-kinase when bound to the regulatory p85 subunit. May mediate the control of various cellular processes by insulin-like peptides. When phosphorylated by the insulin receptor binds specifically to various cellular proteins containing SH2 domains. Involved in control of cell proliferation, cell size, and body and organ growth throughout development. Also has a role in a signaling pathway controlling the physiological response required to endure periods of low nutrient conditions. Insulin/insulin-like growth factor (IGF) signaling pathway has a role in regulating aging and is necessary in the ovary for vitellogenic maturation. In Drosophila yakuba (Fruit fly), this protein is Insulin receptor substrate 1.